A 260-amino-acid polypeptide reads, in one-letter code: Cytosolic Fe-S cluster assembly factor Nubp2 homolog 2 (260 aa).

Residue 14–21 (GKGGVGKS) participates in ATP binding. [4Fe-4S] cluster-binding residues include Cys188 and Cys191.

Belongs to the Mrp/NBP35 ATP-binding proteins family. NUBP2/CFD1 subfamily. In terms of assembly, heterotetramer of 2 Nubp1 and 2 Nubp2 chains. [4Fe-4S] cluster serves as cofactor.

It is found in the cytoplasm. In terms of biological role, component of the cytosolic iron-sulfur (Fe/S) protein assembly (CIA) machinery. Required for maturation of extramitochondrial Fe-S proteins. The Nubp1-Nubp2 heterotetramer forms a Fe-S scaffold complex, mediating the de novo assembly of an Fe-S cluster and its transfer to target apoproteins. This chain is Cytosolic Fe-S cluster assembly factor Nubp2 homolog 2, found in Drosophila yakuba (Fruit fly).